The sequence spans 1450 residues: DNA-directed RNA polymerase III subunit rpc1 (1450 aa).

Positions 67, 70, 77, 80, 107, 110, and 154 each coordinate Zn(2+). Mg(2+) is bound by residues Asp491, Asp493, and Asp495. A bridging helix region spans residues Pro832 to Glu844.

This sequence belongs to the RNA polymerase beta' chain family. Component of the RNA polymerase III (Pol III) complex consisting of 17 subunits.

It is found in the nucleus. The catalysed reaction is RNA(n) + a ribonucleoside 5'-triphosphate = RNA(n+1) + diphosphate. In terms of biological role, DNA-dependent RNA polymerase catalyzes the transcription of DNA into RNA using the four ribonucleoside triphosphates as substrates. Largest and catalytic core component of RNA polymerase III which synthesizes small RNAs, such as 5S rRNA and tRNAs. Forms the polymerase active center together with the second largest subunit. A single-stranded DNA template strand of the promoter is positioned within the central active site cleft of Pol III. A bridging helix emanates from RPC1 and crosses the cleft near the catalytic site and is thought to promote translocation of Pol III by acting as a ratchet that moves the RNA-DNA hybrid through the active site by switching from straight to bent conformations at each step of nucleotide addition. In Dictyostelium discoideum (Social amoeba), this protein is DNA-directed RNA polymerase III subunit rpc1 (polr3a).